Reading from the N-terminus, the 174-residue chain is Peptide deformylase (174 aa).

Residues C96 and H138 each coordinate Fe cation. Residue E139 is part of the active site. H142 contributes to the Fe cation binding site.

It belongs to the polypeptide deformylase family. It depends on Fe(2+) as a cofactor.

The enzyme catalyses N-terminal N-formyl-L-methionyl-[peptide] + H2O = N-terminal L-methionyl-[peptide] + formate. Functionally, removes the formyl group from the N-terminal Met of newly synthesized proteins. Requires at least a dipeptide for an efficient rate of reaction. N-terminal L-methionine is a prerequisite for activity but the enzyme has broad specificity at other positions. This is Peptide deformylase from Nautilia profundicola (strain ATCC BAA-1463 / DSM 18972 / AmH).